The primary structure comprises 493 residues: Glutamate--tRNA ligase (493 aa).

The 'HIGH' region signature appears at Pro-10 to Leu-20. Positions Lys-254–Arg-258 match the 'KMSKS' region motif. ATP is bound at residue Lys-257.

This sequence belongs to the class-I aminoacyl-tRNA synthetase family. Glutamate--tRNA ligase type 1 subfamily. In terms of assembly, monomer.

Its subcellular location is the cytoplasm. It catalyses the reaction tRNA(Glu) + L-glutamate + ATP = L-glutamyl-tRNA(Glu) + AMP + diphosphate. Catalyzes the attachment of glutamate to tRNA(Glu) in a two-step reaction: glutamate is first activated by ATP to form Glu-AMP and then transferred to the acceptor end of tRNA(Glu). The protein is Glutamate--tRNA ligase of Corynebacterium efficiens (strain DSM 44549 / YS-314 / AJ 12310 / JCM 11189 / NBRC 100395).